The sequence spans 777 residues: Semaphorin-4F (777 aa).

An N-terminal signal peptide occupies residues 1–40; the sequence is MLARAERPRPGPRPPPVSLFPPPSSLLLLLLAMLSAPVCG. Residues 41–667 lie on the Extracellular side of the membrane; it reads RVPRSVPRTS…PANRAHTVVG (627 aa). Positions 48 to 516 constitute a Sema domain; sequence RTSLPISEAD…SHTEVTQVNT (469 aa). N70 is a glycosylation site (N-linked (GlcNAc...) asparagine). A disulfide bridge connects residues C118 and C128. N139 carries N-linked (GlcNAc...) asparagine glycosylation. 3 disulfide bridges follow: C146/C155, C279/C390, and C303/C349. N515 carries N-linked (GlcNAc...) asparagine glycosylation. Residues 518 to 569 enclose the PSI domain; the sequence is NCGRLQSCSECILAQDPVCAWSFRLDACVAHAGEHRGMVQDIESADVSSLCP. 3 disulfide bridges follow: C519–C536, C528–C545, and C593–C634. The Ig-like C2-type domain maps to 586–641; that stretch reads VGHVVLPCSPSSAWASCVWHQPSGVTSLTPRRDGLEVVVTPGAMGAYACECQEGGA. Residues 668–688 traverse the membrane as a helical segment; the sequence is AGLVGFFLGVLAASLTLLLIG. Over 689–777 the chain is Cytoplasmic; it reads RRQQRRRQRE…PLATCDETSI (89 aa). The interval 703–742 is disordered; it reads DKVGLDLGAPPSGTTSYSQDPPSPSPEDERLPLALGKRGS. Residues S725 and S727 each carry the phosphoserine modification. Positions 775 to 777 match the PDZ-binding motif; it reads TSI.

This sequence belongs to the semaphorin family. As to quaternary structure, interacts (via PDZ-binding motif) with DLG4/SAP90 (via PDZ domain 2); this interaction may promote translocation of DLG4/SAP90 to the membrane. As to expression, expressed throughout the adult brain, where it shows particularly strong expression in the hippocampus, corpus callosum, granular layer and deep nuclei of the cerebellum, and the mitral layer of the olfactory bulb (at protein level). At the cellular level, detected in neuronal precursors, postmitotic neurons, pyramidal neurons, and glial cells including mature oligodendocytes and oligodendroglial precursor cells (at protein level).

It localises to the cell membrane. It is found in the postsynaptic density. Its subcellular location is the perikaryon. The protein localises to the cell projection. The protein resides in the dendrite. Functionally, probable cell surface receptor that regulates oligodendroglial precursor cell migration. Might also regulate differentiation of oligodendroglial precursor cells. Has growth cone collapse activity against retinal ganglion-cell axons. The chain is Semaphorin-4F (Sema4f) from Mus musculus (Mouse).